The chain runs to 92 residues: Protein RESPONSE TO LOW SULFUR 4 (92 aa).

Positions 8-63 (VMVAASEVEELRQKNGEMEKAVEEMRKEMLQLWRRTQVAEEAEEHLCSQLAELEAE) form a coiled coil.

Its function is as follows. Required for flower development in short-day conditions. This chain is Protein RESPONSE TO LOW SULFUR 4, found in Arabidopsis thaliana (Mouse-ear cress).